The sequence spans 473 residues: Photosystem II CP43 reaction center protein (473 aa).

A propeptide spanning residues 1–14 (MKTLYSLRRFYHVE) is cleaved from the precursor. Threonine 15 carries the post-translational modification N-acetylthreonine. Threonine 15 is modified (phosphothreonine). 5 consecutive transmembrane segments (helical) span residues 69–93 (LFEV…PHLA), 134–155 (LIGP…KDKN), 178–200 (KAVW…RKIT), 255–275 (KPFA…LSYS), and 291–312 (WFNN…ASQA). Residue glutamate 367 participates in [CaMn4O5] cluster binding. Residues 447 to 471 (RARAAAAGFEKGIDRETEPVFFMNP) form a helical membrane-spanning segment.

This sequence belongs to the PsbB/PsbC family. PsbC subfamily. As to quaternary structure, PSII is composed of 1 copy each of membrane proteins PsbA, PsbB, PsbC, PsbD, PsbE, PsbF, PsbH, PsbI, PsbJ, PsbK, PsbL, PsbM, PsbT, PsbX, PsbY, PsbZ, Psb30/Ycf12, at least 3 peripheral proteins of the oxygen-evolving complex and a large number of cofactors. It forms dimeric complexes. Binds multiple chlorophylls and provides some of the ligands for the Ca-4Mn-5O cluster of the oxygen-evolving complex. It may also provide a ligand for a Cl- that is required for oxygen evolution. PSII binds additional chlorophylls, carotenoids and specific lipids. is required as a cofactor.

It is found in the plastid. It localises to the chloroplast thylakoid membrane. One of the components of the core complex of photosystem II (PSII). It binds chlorophyll and helps catalyze the primary light-induced photochemical processes of PSII. PSII is a light-driven water:plastoquinone oxidoreductase, using light energy to abstract electrons from H(2)O, generating O(2) and a proton gradient subsequently used for ATP formation. The protein is Photosystem II CP43 reaction center protein of Staurastrum punctulatum (Green alga).